We begin with the raw amino-acid sequence, 225 residues long: Flagellar transcriptional regulator FlhC (225 aa).

Residues C149, C152, C169, and C172 each coordinate Zn(2+).

The protein belongs to the FlhC family. As to quaternary structure, heterohexamer composed of two FlhC and four FlhD subunits. Each FlhC binds a FlhD dimer, forming a heterotrimer, and a hexamer assembles by dimerization of two heterotrimers. Zn(2+) is required as a cofactor.

The protein resides in the cytoplasm. Its function is as follows. Functions in complex with FlhD as a master transcriptional regulator that regulates transcription of several flagellar and non-flagellar operons by binding to their promoter region. Activates expression of class 2 flagellar genes, including fliA, which is a flagellum-specific sigma factor that turns on the class 3 genes. Also regulates genes whose products function in a variety of physiological pathways. This chain is Flagellar transcriptional regulator FlhC, found in Burkholderia lata (strain ATCC 17760 / DSM 23089 / LMG 22485 / NCIMB 9086 / R18194 / 383).